Here is a 310-residue protein sequence, read N- to C-terminus: Glutarate 2-hydroxylase (310 aa).

Residues His-160, Asp-162, and His-277 each contribute to the Fe cation site.

It belongs to the glutarate hydroxylase family. In terms of assembly, homotetramer. The cofactor is Fe(2+).

The catalysed reaction is glutarate + 2-oxoglutarate + O2 = (S)-2-hydroxyglutarate + succinate + CO2. Its pathway is amino-acid degradation. In terms of biological role, acts as an alpha-ketoglutarate-dependent dioxygenase catalyzing hydroxylation of glutarate (GA) to L-2-hydroxyglutarate (L2HG). Functions in a L-lysine degradation pathway that proceeds via cadaverine, glutarate and L-2-hydroxyglutarate. The protein is Glutarate 2-hydroxylase of Shigella flexneri.